Consider the following 155-residue polypeptide: Transcriptional regulator MraZ (155 aa).

SpoVT-AbrB domains are found at residues 5–52 (TYEN…SQDR) and 81–124 (SMNL…EPAA).

The protein belongs to the MraZ family. As to quaternary structure, forms oligomers.

The protein localises to the cytoplasm. Its subcellular location is the nucleoid. This is Transcriptional regulator MraZ from Pelagibacter ubique (strain HTCC1062).